The primary structure comprises 277 residues: 4-hydroxy-tetrahydrodipicolinate reductase (277 aa).

Residues 10–15 (GAGGRM) and Glu36 contribute to the NAD(+) site. Residue Arg37 coordinates NADP(+). Residues 100-102 (GTT) and 124-127 (SGNM) each bind NAD(+). Catalysis depends on His158, which acts as the Proton donor/acceptor. His159 is a binding site for (S)-2,3,4,5-tetrahydrodipicolinate. Catalysis depends on Lys162, which acts as the Proton donor. 168 to 169 (GT) is a (S)-2,3,4,5-tetrahydrodipicolinate binding site.

Belongs to the DapB family.

Its subcellular location is the cytoplasm. The catalysed reaction is (S)-2,3,4,5-tetrahydrodipicolinate + NAD(+) + H2O = (2S,4S)-4-hydroxy-2,3,4,5-tetrahydrodipicolinate + NADH + H(+). It catalyses the reaction (S)-2,3,4,5-tetrahydrodipicolinate + NADP(+) + H2O = (2S,4S)-4-hydroxy-2,3,4,5-tetrahydrodipicolinate + NADPH + H(+). It functions in the pathway amino-acid biosynthesis; L-lysine biosynthesis via DAP pathway; (S)-tetrahydrodipicolinate from L-aspartate: step 4/4. Catalyzes the conversion of 4-hydroxy-tetrahydrodipicolinate (HTPA) to tetrahydrodipicolinate. In Chelativorans sp. (strain BNC1), this protein is 4-hydroxy-tetrahydrodipicolinate reductase.